Reading from the N-terminus, the 587-residue chain is Lipoprotein LpqB (587 aa).

An N-terminal signal peptide occupies residues 1 to 19 (MERLMRLTILLFLGAVLAG). C20 carries N-palmitoyl cysteine lipidation. The S-diacylglycerol cysteine moiety is linked to residue C20.

This sequence belongs to the LpqB lipoprotein family. As to quaternary structure, interacts with MtrB, probably extracytoplasmically.

It localises to the cell membrane. It is found in the secreted. Its subcellular location is the cell wall. Its function is as follows. May modulate activity of the MtrAB system in controlling homeostasis of the cell wall and cell division. In Mycobacterium tuberculosis (strain CDC 1551 / Oshkosh), this protein is Lipoprotein LpqB.